The sequence spans 1819 residues: Non-reducing polyketide synthase 8 (1819 aa).

The Starter acyltransferase (SAT) domain maps to 38–265; sequence QLTLLSKQKQ…QKIINLPVYG (228 aa). The 436-residue stretch at 405–840 folds into the Ketosynthase family 3 (KS3) domain; that stretch reads KSSIAIVGMS…GGNTMIAIEE (436 aa). Active-site for beta-ketoacyl synthase activity residues include C578, H714, and H758. Residues 943–1262 form the Malonyl-CoA:ACP transacylase (MAT) domain; the sequence is FAFTGQGASY…SLSTLHCAGA (320 aa). The N-terminal hotdog fold stretch occupies residues 1336–1476; the sequence is QRIIEESFDG…GDRSAWLSSW (141 aa). In terms of domain architecture, PKS/mFAS DH spans 1336 to 1646; sequence QRIIEESFDG…FRQYPRILLN (311 aa). Residue H1368 is the Proton acceptor; for dehydratase activity of the active site. The segment at 1404-1642 is dehydratase (DH) domain; it reads AMNVADLEVV…GGIKFRQYPR (239 aa). Residues 1498-1646 form a C-terminal hotdog fold region; sequence IANRLSHNMA…FRQYPRILLN (149 aa). The active-site Proton donor; for dehydratase activity is D1557. The region spanning 1741-1818 is the Carrier domain; that stretch reads VDTNSVASKA…DLRSWLMEYY (78 aa). O-(pantetheine 4'-phosphoryl)serine is present on S1778.

Requires pantetheine 4'-phosphate as cofactor.

Its pathway is secondary metabolite biosynthesis. Its function is as follows. Non-reducing polyketide synthase; part of the gene cluster that mediates the biosynthesis of dibenzodioxocinones such as pestalotiollide B, a novel class of inhibitors against cholesterol ester transfer protein (CEPT). The biosynthesis initiates from condensation of acetate and malonate units catalyzed by the non-reducing PKS pks8/GME11356. Pks8/GME11356 lacks a thioesterase (TE) domain, which is important to the cyclizing of the third ring of atrochrysone carboxylic acid, and the esterase GME11355 might play the role of TE and catalyzes the cyclization reaction of the C ring. The lactamase-like protein GME11357 (or other beta-lactamases in Pestalotiopsis microspora) probably hydrolyzes the thioester bond between the ACP of pks8/GME11356 and the intermediate to release atrochrysone carboxylic acid, which is spontaneously dehydrates to form endocrocin anthrone. Endocrocin anthrone is further converted to emodin via the endocrocin intermediate. Emodin is then oxidized by several enzymes such as the Baeyer-Villiger oxidase GME11358, the oxidoreductase GME11367, the short chain dehydrogenase/reductase GME11373, as well as by other oxidoreductases from the cluster, to modify the A and C rings and open the B ring, and finally yield monodictyphenone. The prenyltransferase GME11375 may catalyze the addition reaction between the C5 side chains and the carbon bone of dibenzodioxocinones. The remaining biochemical reactions to the final product dibenzodioxocinones should be methylation catalyzed by methyltransferase GME11366 and reduction and lactonization reaction catalyzed by a series of oxidordeuctases. The chain is Non-reducing polyketide synthase 8 from Pestalotiopsis microspora.